Reading from the N-terminus, the 204-residue chain is dTTP/UTP pyrophosphatase (204 aa).

Aspartate 68 serves as the catalytic Proton acceptor.

It belongs to the Maf family. YhdE subfamily. A divalent metal cation serves as cofactor.

It localises to the cytoplasm. The catalysed reaction is dTTP + H2O = dTMP + diphosphate + H(+). It catalyses the reaction UTP + H2O = UMP + diphosphate + H(+). Nucleoside triphosphate pyrophosphatase that hydrolyzes dTTP and UTP. May have a dual role in cell division arrest and in preventing the incorporation of modified nucleotides into cellular nucleic acids. This chain is dTTP/UTP pyrophosphatase, found in Thermotoga petrophila (strain ATCC BAA-488 / DSM 13995 / JCM 10881 / RKU-1).